Reading from the N-terminus, the 376-residue chain is Ribonucleoside-diphosphate reductase subunit beta (376 aa).

Positions 85, 116, and 119 each coordinate Fe cation. The active site involves tyrosine 123. Fe cation-binding residues include glutamate 205, glutamate 239, and histidine 242.

This sequence belongs to the ribonucleoside diphosphate reductase small chain family. Tetramer of two alpha and two beta subunits. Fe cation serves as cofactor.

It carries out the reaction a 2'-deoxyribonucleoside 5'-diphosphate + [thioredoxin]-disulfide + H2O = a ribonucleoside 5'-diphosphate + [thioredoxin]-dithiol. Provides the precursors necessary for DNA synthesis. Catalyzes the biosynthesis of deoxyribonucleotides from the corresponding ribonucleotides. In Buchnera aphidicola subsp. Acyrthosiphon pisum (strain APS) (Acyrthosiphon pisum symbiotic bacterium), this protein is Ribonucleoside-diphosphate reductase subunit beta (nrdB).